The sequence spans 419 residues: CinA-like protein (419 aa).

Belongs to the CinA family.

This Parasynechococcus marenigrum (strain WH8102) protein is CinA-like protein.